A 525-amino-acid polypeptide reads, in one-letter code: GMP synthase [glutamine-hydrolyzing] (525 aa).

The Glutamine amidotransferase type-1 domain maps to 12–203 (TVLVVDFGAQ…LYRGAGLTPS (192 aa)). Cys-89 acts as the Nucleophile in catalysis. Active-site residues include His-177 and Glu-179. The GMPS ATP-PPase domain maps to 204–399 (WTTGNVIDEQ…LGLPDEIVQR (196 aa)). An ATP-binding site is contributed by 231-237 (SGGVDSA).

As to quaternary structure, homodimer.

The enzyme catalyses XMP + L-glutamine + ATP + H2O = GMP + L-glutamate + AMP + diphosphate + 2 H(+). The protein operates within purine metabolism; GMP biosynthesis; GMP from XMP (L-Gln route): step 1/1. In terms of biological role, catalyzes the synthesis of GMP from XMP. The protein is GMP synthase [glutamine-hydrolyzing] of Streptomyces avermitilis (strain ATCC 31267 / DSM 46492 / JCM 5070 / NBRC 14893 / NCIMB 12804 / NRRL 8165 / MA-4680).